Consider the following 296-residue polypeptide: GTPase Era (296 aa).

An Era-type G domain is found at 7 to 174; the sequence is HCGFVAIVGR…LDQVRPHLPE (168 aa). Residues 15 to 22 form a G1 region; the sequence is GRPNVGKS. 15–22 serves as a coordination point for GTP; it reads GRPNVGKS. The interval 41–45 is G2; that stretch reads QTTRH. Residues 62–65 form a G3 region; the sequence is DTPG. GTP contacts are provided by residues 62-66 and 123-126; these read DTPGF and NKLD. The interval 123-126 is G4; the sequence is NKLD. The segment at 153–155 is G5; that stretch reads VSA. One can recognise a KH type-2 domain in the interval 205–281; the sequence is LGEELPYEMN…FLQVWVKVKS (77 aa).

It belongs to the TRAFAC class TrmE-Era-EngA-EngB-Septin-like GTPase superfamily. Era GTPase family. As to quaternary structure, monomer.

Its subcellular location is the cytoplasm. It is found in the cell inner membrane. In terms of biological role, an essential GTPase that binds both GDP and GTP, with rapid nucleotide exchange. Plays a role in 16S rRNA processing and 30S ribosomal subunit biogenesis and possibly also in cell cycle regulation and energy metabolism. The chain is GTPase Era from Chromobacterium violaceum (strain ATCC 12472 / DSM 30191 / JCM 1249 / CCUG 213 / NBRC 12614 / NCIMB 9131 / NCTC 9757 / MK).